The primary structure comprises 209 residues: Imidazole glycerol phosphate synthase subunit HisH (209 aa).

The region spanning 1–205 (MIAIIDYGMG…KGVVETWKSS (205 aa)) is the Glutamine amidotransferase type-1 domain. Residue C79 is the Nucleophile of the active site. Catalysis depends on residues H180 and E182.

As to quaternary structure, heterodimer of HisH and HisF.

It is found in the cytoplasm. It carries out the reaction 5-[(5-phospho-1-deoxy-D-ribulos-1-ylimino)methylamino]-1-(5-phospho-beta-D-ribosyl)imidazole-4-carboxamide + L-glutamine = D-erythro-1-(imidazol-4-yl)glycerol 3-phosphate + 5-amino-1-(5-phospho-beta-D-ribosyl)imidazole-4-carboxamide + L-glutamate + H(+). The enzyme catalyses L-glutamine + H2O = L-glutamate + NH4(+). Its pathway is amino-acid biosynthesis; L-histidine biosynthesis; L-histidine from 5-phospho-alpha-D-ribose 1-diphosphate: step 5/9. In terms of biological role, IGPS catalyzes the conversion of PRFAR and glutamine to IGP, AICAR and glutamate. The HisH subunit catalyzes the hydrolysis of glutamine to glutamate and ammonia as part of the synthesis of IGP and AICAR. The resulting ammonia molecule is channeled to the active site of HisF. The chain is Imidazole glycerol phosphate synthase subunit HisH from Bacillus thuringiensis (strain Al Hakam).